Reading from the N-terminus, the 357-residue chain is 3-isopropylmalate dehydrogenase (357 aa).

Substrate contacts are provided by R99, R109, R133, and D223. 3 residues coordinate Mg(2+): D223, D247, and D251. 283-295 (GSAPDIAGEQRAD) is a binding site for NAD(+).

It belongs to the isocitrate and isopropylmalate dehydrogenases family. LeuB type 2 subfamily. As to quaternary structure, homodimer. It depends on Mg(2+) as a cofactor. Requires Mn(2+) as cofactor.

The protein localises to the cytoplasm. The enzyme catalyses (2R,3S)-3-isopropylmalate + NAD(+) = 4-methyl-2-oxopentanoate + CO2 + NADH. It participates in amino-acid biosynthesis; L-leucine biosynthesis; L-leucine from 3-methyl-2-oxobutanoate: step 3/4. Its function is as follows. Catalyzes the oxidation of 3-carboxy-2-hydroxy-4-methylpentanoate (3-isopropylmalate) to 3-carboxy-4-methyl-2-oxopentanoate. The product decarboxylates to 4-methyl-2 oxopentanoate. The sequence is that of 3-isopropylmalate dehydrogenase from Leifsonia xyli subsp. xyli (strain CTCB07).